Here is a 454-residue protein sequence, read N- to C-terminus: MNHSDTIVAQATPPGRGGVGILRVSGSKAAEVAQLLLGKLPKPRYADYLPFRDADGSTLDQGIALWFPGPNSFTGEDVLEFQGHGGPVILDLLLKRILSLPGLRIANPGEFSERAFLNDKLDLAQAEAIADLIDASSEQAARSAVNSLQGVFSTRVNHLVEALTHLRIYVEAAIDFPDEEIDFLSDGKIEAQLHQVIHNLAEVRSEARQGSLLREGMKVVIAGRPNAGKSSLLNALAGREAAIVTDIAGTTRDVLREHIHIDGMPLHIIDTAGLREASDEVERIGIERAWHEIEQADHVLFMVDGTTTEATNPAEIWPDFIARLPESLPVTVVRNKADITGETRGVEEVNGHSLIRLSARTGEGIENLRDHLKSSMGFSGNMEGGFLARRRHLQALELAATHLEQGKHQLLAAWAGELLAEELRLAQQALSEITGEFSSDDLLGRIFSSFCIGK.

Residues R23, E80, and K120 each contribute to the (6S)-5-formyl-5,6,7,8-tetrahydrofolate site. Residues 216-377 form the TrmE-type G domain; the sequence is GMKVVIAGRP…LRDHLKSSMG (162 aa). K(+) is bound at residue N226. GTP is bound by residues 226–231, 245–251, 270–273, 335–338, and 358–360; these read NAGKSS, TDIAGTT, DTAG, NKAD, and SAR. S230 contacts Mg(2+). K(+) contacts are provided by T245, I247, and T250. Residue T251 coordinates Mg(2+). Residue K454 coordinates (6S)-5-formyl-5,6,7,8-tetrahydrofolate.

It belongs to the TRAFAC class TrmE-Era-EngA-EngB-Septin-like GTPase superfamily. TrmE GTPase family. Homodimer. Heterotetramer of two MnmE and two MnmG subunits. Requires K(+) as cofactor.

It is found in the cytoplasm. Functionally, exhibits a very high intrinsic GTPase hydrolysis rate. Involved in the addition of a carboxymethylaminomethyl (cmnm) group at the wobble position (U34) of certain tRNAs, forming tRNA-cmnm(5)s(2)U34. This is tRNA modification GTPase MnmE from Erwinia tasmaniensis (strain DSM 17950 / CFBP 7177 / CIP 109463 / NCPPB 4357 / Et1/99).